We begin with the raw amino-acid sequence, 799 residues long: MDFVDFDSFSNDEITGEDNLPHPQPALSLPITSNIETIGKRISSLNTITRSLLKFEGTDEEEGESSSENASKENELAQKYAQMSLNFLKKEETQHGSDGKIANGVDGKSYNDFEHSKATLSTRLSRVLNDSLSETLLREIFSHLEDKYSSYDDSIDELIEPGVVGSMSRKKLRGKVENELIKNQSLVLKEYQPVIKQLKVVEDRLSKLNDLNKVTNDNIENKFKYSSEFNTKVKELNSEKRLINLKKNLLINFKAKFTLNEYEEFVLDSGDINDEFFTVLKKAEEINANCSILLSIENPQLGLKIMSKSNHLINRSVERIINFTNKTLSNLYSLNSKARLRTLHQCMRYLKNKLNYFSNVVNTFVDSRAKVLVDDFLSQIQGNLDSNGNVSTFKRRSSSISSETSSRPIYVSAHDPIRFIGDLLAYVHSLVVNESDTIISIFTFETSESEVEKKEFETIIKDIIDKILKSLVKPVKSKVTQIISAETKLSTSYSIFNLVELYSMMFTKQLSDTSEVSIALKSLVKASQDRLASIISNRLASIRTSNSAQLELNLDLQPPEWIIEFYSDLLPILDQTTTDTIFNFTAEENEEFMKLLVDEPIEIFFEHIGSNKIFESKKDQLILKHNFLDLILSKLLPITIVSDKVIEINEMINTLTQELTQLQLEAILKECGLYDYYNIVNMICPFSDDFFDTSIYEPIKENQLYNKSELLKINEIIQSYIPNALLDIQSSLLKLNPPSIVNEVTTNASLEFVKYYGKLSQINSAFLQETFTWSDFEIATLLGVDEDYTEFIKLVANSG.

This sequence belongs to the COG6 family.

The protein resides in the golgi apparatus membrane. Functionally, acts as a component of the peripheral membrane COG complex that is involved in intra-Golgi protein trafficking. COG is located at the cis-Golgi, and regulates tethering of retrograde intra-Golgi vesicles and possibly a number of other membrane trafficking events. The polypeptide is Conserved oligomeric Golgi complex subunit 6 (COG6) (Scheffersomyces stipitis (strain ATCC 58785 / CBS 6054 / NBRC 10063 / NRRL Y-11545) (Yeast)).